The chain runs to 219 residues: Putative mediator of RNA polymerase II transcription subunit 10 (219 aa).

Residues 1-39 (MEQQQPQQQNDGQQQQQQQQQHQQQQQQQQQQQQQQQQS) are compositionally biased toward low complexity. 2 disordered regions span residues 1–42 (MEQQ…SEQE) and 177–219 (KETQ…INNN). 2 coiled-coil regions span residues 13-74 (QQQQ…VVEE) and 166-219 (EYAE…INNN). Residues 177–192 (KETQEQQNDDQIKVDD) show a composition bias toward basic and acidic residues. The segment covering 194–219 (NNNNNNNNNNNYNNNNNNNNNNINNN) has biased composition (low complexity).

It belongs to the Mediator complex subunit 10 family. In terms of assembly, component of the Mediator complex.

The protein localises to the nucleus. Its function is as follows. Component of the Mediator complex, a coactivator involved in the regulated transcription of nearly all RNA polymerase II-dependent genes. Mediator functions as a bridge to convey information from gene-specific regulatory proteins to the basal RNA polymerase II transcription machinery. Mediator is recruited to promoters by direct interactions with regulatory proteins and serves as a scaffold for the assembly of a functional preinitiation complex with RNA polymerase II and the general transcription factors. This is Putative mediator of RNA polymerase II transcription subunit 10 (med10) from Dictyostelium discoideum (Social amoeba).